The chain runs to 448 residues: Trigger factor (448 aa).

The region spanning 172-257 (GDRVTVDFVG…MKKIEWPHLP (86 aa)) is the PPIase FKBP-type domain.

The protein belongs to the FKBP-type PPIase family. Tig subfamily.

The protein resides in the cytoplasm. It carries out the reaction [protein]-peptidylproline (omega=180) = [protein]-peptidylproline (omega=0). In terms of biological role, involved in protein export. Acts as a chaperone by maintaining the newly synthesized protein in an open conformation. Functions as a peptidyl-prolyl cis-trans isomerase. The protein is Trigger factor of Burkholderia cenocepacia (strain ATCC BAA-245 / DSM 16553 / LMG 16656 / NCTC 13227 / J2315 / CF5610) (Burkholderia cepacia (strain J2315)).